Reading from the N-terminus, the 59-residue chain is Conorfamide-Vc1 (59 aa).

The signal sequence occupies residues 1–19; that stretch reads MSGRGFLLLALLLLVTVEA. A propeptide spanning residues 20–25 is cleaved from the precursor; it reads TKVEKK. Residues 32–39 form a positively charged region crucial for activity against MRGPRX1 receptors region; sequence AWSGPRNR. A Phenylalanine amide modification is found at phenylalanine 43. A propeptide spanning residues 45–59 is cleaved from the precursor; it reads RRDMQSPLLSERLRL.

Belongs to the FARP (FMRFamide related peptide) family. Expressed by the venom duct.

The protein resides in the secreted. In terms of biological role, this peptide activates human and mouse sensory neuron-specific G-protein coupled receptors MRGPRX1. The activity on human receptors has been measured (EC(50)=1.8 uM). Compared with the agonist chloroquine (anti-malaria drug), it is 200-fold more potent. The peptide also causes an increase in cytosolic calcium in a specific subset of DRG neurons, and, in contrast to other Conus venom peptides, the peptide also affects a large fraction of the non-neuronal cells. In vivo, when intracranially injected into mice, it principally renders mice unable to move, and at very low doses, it causes hyperactivity. It also induces itch sensation, since intradermal cheek injection into humanized transgenic mouse (mouse MRGPRX1 replaced by human MRGPRX1) induces scratching. In vivo, when tested at high doses (10 uM) on zebrafish larvae, it induces a range of behavioral effects ranging from an early hypoactivity during the first hour of treatment to an increase in movement during the following hours when the larvae are submitted to strobe light phases. In Conus victoriae (Queen Victoria cone), this protein is Conorfamide-Vc1.